A 317-amino-acid chain; its full sequence is Signal recognition particle receptor FtsY (317 aa).

GTP contacts are provided by residues 117-124 (GVNGVGKT), 199-203 (DTAGR), and 263-266 (TKLD).

Belongs to the GTP-binding SRP family. FtsY subfamily. Part of the signal recognition particle protein translocation system, which is composed of SRP and FtsY.

Its subcellular location is the cell membrane. The protein localises to the cytoplasm. It catalyses the reaction GTP + H2O = GDP + phosphate + H(+). Involved in targeting and insertion of nascent membrane proteins into the cytoplasmic membrane. Acts as a receptor for the complex formed by the signal recognition particle (SRP) and the ribosome-nascent chain (RNC). This Deinococcus radiodurans (strain ATCC 13939 / DSM 20539 / JCM 16871 / CCUG 27074 / LMG 4051 / NBRC 15346 / NCIMB 9279 / VKM B-1422 / R1) protein is Signal recognition particle receptor FtsY.